Consider the following 39-residue polypeptide: MTIERTYPIFTFRWLAIHGLAVPTVFFLGSISAMQFIQR.

A helical transmembrane segment spans residues 14 to 30 (WLAIHGLAVPTVFFLGS). A heme-binding site is contributed by His-18.

It belongs to the PsbE/PsbF family. Heterodimer of an alpha subunit and a beta subunit. PSII is composed of 1 copy each of membrane proteins PsbA, PsbB, PsbC, PsbD, PsbE, PsbF, PsbH, PsbI, PsbJ, PsbK, PsbL, PsbM, PsbT, PsbX, PsbY, PsbZ, Psb30/Ycf12, at least 3 peripheral proteins of the oxygen-evolving complex and a large number of cofactors. It forms dimeric complexes. Heme b serves as cofactor.

It localises to the plastid. It is found in the chloroplast thylakoid membrane. In terms of biological role, this b-type cytochrome is tightly associated with the reaction center of photosystem II (PSII). PSII is a light-driven water:plastoquinone oxidoreductase that uses light energy to abstract electrons from H(2)O, generating O(2) and a proton gradient subsequently used for ATP formation. It consists of a core antenna complex that captures photons, and an electron transfer chain that converts photonic excitation into a charge separation. This Staurastrum punctulatum (Green alga) protein is Cytochrome b559 subunit beta.